The sequence spans 163 residues: uncharacterized protein (163 aa).

Residues 128 to 163 (PKKEKIKKAKRKKKGAKRASKKQKAKSKSARKSRRV) are disordered. Residues 129–163 (KKEKIKKAKRKKKGAKRASKKQKAKSKSARKSRRV) are compositionally biased toward basic residues.

This is an uncharacterized protein from Sulfurisphaera tokodaii (strain DSM 16993 / JCM 10545 / NBRC 100140 / 7) (Sulfolobus tokodaii).